A 797-amino-acid polypeptide reads, in one-letter code: Xaa-Pro dipeptidyl-peptidase (797 aa).

Residues serine 370, aspartate 490, and histidine 521 each act as charge relay system in the active site.

The protein belongs to the peptidase S15 family. Homodimer.

The protein resides in the cytoplasm. It carries out the reaction Hydrolyzes Xaa-Pro-|- bonds to release unblocked, N-terminal dipeptides from substrates including Ala-Pro-|-p-nitroanilide and (sequentially) Tyr-Pro-|-Phe-Pro-|-Gly-Pro-|-Ile.. Removes N-terminal dipeptides sequentially from polypeptides having unsubstituted N-termini provided that the penultimate residue is proline. In Lacticaseibacillus paracasei (strain ATCC 334 / BCRC 17002 / CCUG 31169 / CIP 107868 / KCTC 3260 / NRRL B-441) (Lactobacillus paracasei), this protein is Xaa-Pro dipeptidyl-peptidase.